Reading from the N-terminus, the 424-residue chain is CAAX prenyl protease 1 homolog (424 aa).

The next 5 helical transmembrane spans lie at 3–23, 67–87, 109–129, 155–175, and 185–205; these read IPFMETVVGFMIVMYIFETYL, EFVTILMDSAILFFGILPWFW, LSFLAGVMTWSQITDLPFSLY, GTFLSVILGPPIVAAIIFIVQ, and LWAFMFILSLVMMTIYPVLIA. Residue H284 coordinates Zn(2+). E285 is an active-site residue. Residue H288 participates in Zn(2+) binding. A run of 2 helical transmembrane segments spans residues 295–315 and 332–352; these read TYSFIAVQILAFLQFGGYTLV and VLIGLIIFQHTVIPLQHLVSF. Zn(2+) is bound at residue E362. The active-site Proton donor is the D366.

The protein belongs to the peptidase M48A family. Zn(2+) is required as a cofactor. Expressed in leaves, stems and flowers.

It localises to the endoplasmic reticulum membrane. The enzyme catalyses Hydrolyzes the peptide bond -P2-(S-farnesyl or geranylgeranyl)C-P1'-P2'-P3'-COOH where P1' and P2' are amino acids with aliphatic side chains and P3' is any C-terminal residue.. Its function is as follows. Proteolytically removes the C-terminal three residues of farnesylated proteins. The substrate specificity is only partially overlapping with that of FACE2. The sequence is that of CAAX prenyl protease 1 homolog (FACE1) from Arabidopsis thaliana (Mouse-ear cress).